A 167-amino-acid chain; its full sequence is Troponin C-akin-1 protein (167 aa).

Substrate is bound at residue 17–20; the sequence is YGAL. E92 (proton acceptor) is an active-site residue.

Belongs to the gamma-glutamylcyclotransferase family. In terms of tissue distribution, in embryos, expression is seen in heart cells of the dorsal vessel and hindgut visceral mesoderm.

Functionally, putative gamma-glutamylcyclotransferase. This is Troponin C-akin-1 protein (Tina-1) from Drosophila melanogaster (Fruit fly).